The chain runs to 242 residues: Ubiquinone biosynthesis O-methyltransferase (242 aa).

R44, G64, D85, and M129 together coordinate S-adenosyl-L-methionine.

The protein belongs to the methyltransferase superfamily. UbiG/COQ3 family.

It carries out the reaction a 3-demethylubiquinol + S-adenosyl-L-methionine = a ubiquinol + S-adenosyl-L-homocysteine + H(+). The enzyme catalyses a 3-(all-trans-polyprenyl)benzene-1,2-diol + S-adenosyl-L-methionine = a 2-methoxy-6-(all-trans-polyprenyl)phenol + S-adenosyl-L-homocysteine + H(+). It functions in the pathway cofactor biosynthesis; ubiquinone biosynthesis. In terms of biological role, O-methyltransferase that catalyzes the 2 O-methylation steps in the ubiquinone biosynthetic pathway. This Yersinia enterocolitica serotype O:8 / biotype 1B (strain NCTC 13174 / 8081) protein is Ubiquinone biosynthesis O-methyltransferase.